Consider the following 127-residue polypeptide: Small ribosomal subunit protein uS11 (127 aa).

The protein belongs to the universal ribosomal protein uS11 family. As to quaternary structure, part of the 30S ribosomal subunit. Interacts with proteins S7 and S18. Binds to IF-3.

Its function is as follows. Located on the platform of the 30S subunit, it bridges several disparate RNA helices of the 16S rRNA. Forms part of the Shine-Dalgarno cleft in the 70S ribosome. In Streptococcus gordonii (strain Challis / ATCC 35105 / BCRC 15272 / CH1 / DL1 / V288), this protein is Small ribosomal subunit protein uS11.